The primary structure comprises 40 residues: RapK inhibitor (40 aa).

Propeptides lie at residues 1-34 (MKKL…IQVA) and G40.

Belongs to the Phr family. Post-translationally, contains a predicted signal peptide cleavage site in the N-terminal region, however the propeptide is probably only subject to processing events at the ends of the mature peptide.

Its subcellular location is the secreted. The protein resides in the cytoplasm. Its function is as follows. Signaling molecule involved in the regulation of genetic competence development. Secreted during production, but the mature peptide acts intracellularly, indicating that it needs to be imported into the cell to function. Stimulates expression of the genes controlled by ComA, a transcriptional factor that regulates the development of genetic competence. Acts by inhibiting RapK, which regulates the activity of ComA. This is RapK inhibitor (phrK) from Bacillus subtilis (strain 168).